The primary structure comprises 64 residues: uncharacterized protein (64 aa).

A disordered region spans residues 1–64 (MNNPNIVPPH…QNQPPQRPQY (64 aa)). Low complexity predominate over residues 8-32 (PPHFNQHQQQNHNQNQPPHHMNNPN).

This is an uncharacterized protein from Dictyostelium discoideum (Social amoeba).